An 897-amino-acid polypeptide reads, in one-letter code: MRSKHLVTLFIITFLSFSTVKVWGKDVFAGFVTKKLKTLLDCNFALYYNFKGNGPDAGSFLDFVDEPEQFYWFVEHFLSVKFRVPKHLKDKNIHNFTPCLNRSWVSEFLKEYEEPFVNPVMKFLDKEQRLFFTYNFGDVEPQGKYTYFPVKEFHKYCILPPLIKTNIKDGESGEFLKYQLNKEEYKVFLSSVGSQMTAIKNLYSTVEDEQRKQLLKVIIENESTNDISVQCPTYNIKLHYTKECANSNNILKCIDEFLRKTCEKKTESKHPSADLCEHLQFLFESLKNPYLDNFKKFMTNSDFTLIKPQSVWNVPIFDIYKPKNYLDSVQNLDTECFKKLNSKNLIFLSFHDDIPNNPYYNVELQEIVKLSTYTYSIFDKLYNFFFVFKKSGAPISPVSVKELSHNITDFSFKEDNSEIQCQNVRKSLDLEVDVETMKGIAAEKLCKIIEKFILTKDDASKPEKSDIHRGFRILCILISTHVEAYNIVRQLLNMESMISLTRYTSLYIHKFFKSVTLLKGNFLYKNNKAIRYSRACSKASLHVPSVLYRRNIYIPETFLSLYLGLSNLVSSNPSSPFFEYAIIEFLVTYYNKGSEKFVLYFISIISVLYINEYYYEQLSCFYPKEFELIKSRMIHPNIVDRILKGIDNLMKSTRYDKMRTMYLDFESSDIFSREKVFTALYNFDSFIKTNEQLKKKNLEEISEIPVQLETSNDGIGYRKQDVLYETDKPQTMDEASYEETVDEDAHHVNEKQHSAHFLDAIAEKDILEEKTKDQDLEIELYKYMGPLKEQSKSTSAASTSDELSGSEGPSTESTSTGNQGEDKTTDNTYKEMEELEEAEGTSNLKKGLEFYKSSLKLDQLDKEKPKKKKSKRKKKRDSSSDRILLEESKTFTSENEL.

An N-terminal signal peptide occupies residues 1–24; sequence MRSKHLVTLFIITFLSFSTVKVWG. 5 disulfide bridges follow: Cys-157–Cys-231, Cys-244–Cys-253, Cys-262–Cys-276, Cys-421–Cys-620, and Cys-475–Cys-536. A helical transmembrane segment spans residues 597–615; that stretch reads FVLYFISIISVLYINEYYY. 2 disordered regions span residues 788–845 and 859–897; these read KEQS…SNLK and QLDK…ENEL. Polar residues predominate over residues 792–801; sequence KSTSAASTSD. The span at 802–817 shows a compositional bias: low complexity; that stretch reads ELSGSEGPSTESTSTG. A Phosphoserine modification is found at Ser-804. Residues 820-832 are compositionally biased toward basic and acidic residues; that stretch reads GEDKTTDNTYKEM. A compositionally biased stretch (basic residues) spans 865–876; that stretch reads PKKKKSKRKKKR. Residues 877 to 889 are compositionally biased toward basic and acidic residues; it reads DSSSDRILLEESK.

As to quaternary structure, component of the RhopH complex, composed of CLAG3.1/CLAG3.2, RhopH2 and RhopH3 with a 1:1:1 subunit stoichiometry. Interacts with CLAG3.1/CLAG3.2. Interacts with CDPK1; the interaction promotes RhopH3 phosphorylation in merozoites. Proteolytically cleaved near C-terminus.

The protein resides in the host cell membrane. It is found in the parasitophorous vacuole membrane. The protein localises to the cytoplasmic vesicle. Its subcellular location is the secretory vesicle. It localises to the rhoptry. In terms of biological role, participates in the formation of new permeability pathways in Plasmodium-infected erythrocytes enabling the uptake of nutrients from the blood plasma. Required for maintaining invasion capacity of merozoites. Required for the trophozoite to schizont developmental transition of the intracellular parasite. This chain is High molecular weight rhoptry protein 3, found in Plasmodium falciparum.